A 56-amino-acid chain; its full sequence is Large ribosomal subunit protein bL32 (56 aa).

A disordered region spans residues 1–40 (MAVQQNKKSRSKRGMRRSHDSLGTAQLSVDATSGELHRRH). Positions 7-16 (KKSRSKRGMR) are enriched in basic residues. Over residues 21-31 (SLGTAQLSVDA) the composition is skewed to polar residues.

This sequence belongs to the bacterial ribosomal protein bL32 family.

This chain is Large ribosomal subunit protein bL32, found in Shewanella halifaxensis (strain HAW-EB4).